The primary structure comprises 213 residues: A-type ATP synthase subunit D (213 aa).

Belongs to the V-ATPase D subunit family. In terms of assembly, has multiple subunits with at least A(3), B(3), C, D, E, F, H, I and proteolipid K(x).

It localises to the cell membrane. In terms of biological role, component of the A-type ATP synthase that produces ATP from ADP in the presence of a proton gradient across the membrane. This is A-type ATP synthase subunit D from Saccharolobus solfataricus (strain ATCC 35092 / DSM 1617 / JCM 11322 / P2) (Sulfolobus solfataricus).